Here is a 263-residue protein sequence, read N- to C-terminus: MSVTNIPQSHETNEMQHIKNQSHWRVILSSLGIFMATVYPIFMYLVFTKDCFEERHLLRLITLLLPFLYSTIQYLFLLYTNWKNGHKQEDILYNILYYLLNLLLTTFSIISILSIIALIINRRENDDDLFFFSVILPSMPLTYLLSTSCRLVPGQIGFIDTGINIFIDILILSCLVSLTLICIEPKDYLCFIAISSALTLVRLLKKKYLSSKQSPPPTAPWRVAIFVLIFSFVVFIYVLAACGSITALDYHFHLFDKVKSILS.

This sequence belongs to the UPF0328 family.

The protein is UPF0328 protein ECU08_2060 of Encephalitozoon cuniculi (strain GB-M1) (Microsporidian parasite).